We begin with the raw amino-acid sequence, 419 residues long: 3-isopropylmalate dehydratase large subunit (419 aa).

[4Fe-4S] cluster is bound by residues Cys300, Cys360, and Cys363.

It belongs to the aconitase/IPM isomerase family. LeuC type 2 subfamily. As to quaternary structure, heterodimer of LeuC and LeuD. [4Fe-4S] cluster is required as a cofactor.

The enzyme catalyses (2R,3S)-3-isopropylmalate = (2S)-2-isopropylmalate. It functions in the pathway amino-acid biosynthesis; L-leucine biosynthesis; L-leucine from 3-methyl-2-oxobutanoate: step 2/4. Functionally, catalyzes the isomerization between 2-isopropylmalate and 3-isopropylmalate, via the formation of 2-isopropylmaleate. In Clostridium beijerinckii (strain ATCC 51743 / NCIMB 8052) (Clostridium acetobutylicum), this protein is 3-isopropylmalate dehydratase large subunit.